We begin with the raw amino-acid sequence, 953 residues long: Isoleucine--tRNA ligase (953 aa).

A 'HIGH' region motif is present at residues 58–68 (PYANGFIHLGH). Glu-573 is a binding site for L-isoleucyl-5'-AMP. The 'KMSKS' region motif lies at 614–618 (KMSKS). Residue Lys-617 participates in ATP binding. Residues Cys-916, Cys-919, Cys-936, and Cys-939 each contribute to the Zn(2+) site.

Belongs to the class-I aminoacyl-tRNA synthetase family. IleS type 1 subfamily. As to quaternary structure, monomer. It depends on Zn(2+) as a cofactor.

It is found in the cytoplasm. It carries out the reaction tRNA(Ile) + L-isoleucine + ATP = L-isoleucyl-tRNA(Ile) + AMP + diphosphate. Functionally, catalyzes the attachment of isoleucine to tRNA(Ile). As IleRS can inadvertently accommodate and process structurally similar amino acids such as valine, to avoid such errors it has two additional distinct tRNA(Ile)-dependent editing activities. One activity is designated as 'pretransfer' editing and involves the hydrolysis of activated Val-AMP. The other activity is designated 'posttransfer' editing and involves deacylation of mischarged Val-tRNA(Ile). The chain is Isoleucine--tRNA ligase from Blochmanniella floridana.